The primary structure comprises 203 residues: Large ribosomal subunit protein uL18 (203 aa).

It belongs to the universal ribosomal protein uL18 family. As to quaternary structure, part of the 50S ribosomal subunit. Contacts the 5S and 23S rRNAs.

In terms of biological role, this is one of the proteins that bind and probably mediate the attachment of the 5S RNA into the large ribosomal subunit, where it forms part of the central protuberance. In Pyrococcus furiosus (strain ATCC 43587 / DSM 3638 / JCM 8422 / Vc1), this protein is Large ribosomal subunit protein uL18.